The primary structure comprises 259 residues: MASPQGGQIAIAMRLRNQLQSVYKMDPLRNEEEVRVKIKDLNEHIVCCLCAGYFVDATTITECLHTFCKSCIVKYLQTSKYCPMCNIKIHETQPLLNLKLDRVMQDIVYKLVPGLQDSEEKRIREFYQSRGLDRVTQPTGEEPALSNLGLPFSSFDHSKAHYYRYDEQLNLCLERLSSGKDKNKSVLQNKYVRCSVRAEVRHLRRVLCHRLMLNPQHVQLLFDNEVLPDHMTMKQIWLSRWFGKPSPLLLQYSVKEKRR.

Residue alanine 2 is modified to N-acetylalanine. At serine 3 the chain carries Phosphoserine. Residue lysine 24 forms a Glycyl lysine isopeptide (Lys-Gly) (interchain with G-Cter in SUMO2) linkage. An RING-type zinc finger spans residues 47–86; sequence CCLCAGYFVDATTITECLHTFCKSCIVKYLQTSKYCPMCN. Positions 86-247 are required for repressor activity; the sequence is NIKIHETQPL…LSRWFGKPSP (162 aa). Lysine 88 is covalently cross-linked (Glycyl lysine isopeptide (Lys-Gly) (interchain with G-Cter in SUMO2)). Residues 150 to 255 form a required for the interaction with the KDM2B-SKP1 heterodimeric complex region; the sequence is LPFSSFDHSK…SPLLLQYSVK (106 aa). The segment at 167–255 is RING-finger and WD40-associated ubiquitin-like domain (RAWUL); sufficient for interaction with BCOR and BCORL1; that stretch reads EQLNLCLERL…SPLLLQYSVK (89 aa).

Interacts with BCORL1, forming heterodimers. The PCGF1-BCORL1 heterodimeric complex interacts with the KDM2B-SKP1 heterodimeric complex to form a homotetrameric polycomb repression complex 1 (PRC1.1). Component of the repressive BCOR complex containing a Polycomb group subcomplex at least composed of RYBP, RING1 and RNF2/RING2. Specifically interacts with BCOR, RING1 and RNF2/RING2. Component of a PRC1-like complex. Interacts with CBX6, CBX7 and CBX8. Interacts with DPPA4, NANOG, POU5F1 and RYBP. Ubiquitous.

It is found in the nucleus. Its function is as follows. Component of the Polycomb group (PcG) multiprotein BCOR complex, a complex required to maintain the transcriptionally repressive state of some genes, such as BCL6 and the cyclin-dependent kinase inhibitor, CDKN1A. Transcriptional repressor that may be targeted to the DNA by BCL6; this transcription repressor activity may be related to PKC signaling pathway. Represses CDKN1A expression by binding to its promoter, and this repression is dependent on the retinoic acid response element (RARE element). Promotes cell cycle progression and enhances cell proliferation as well. May have a positive role in tumor cell growth by down-regulating CDKN1A. Component of a Polycomb group (PcG) multiprotein PRC1-like complex, a complex class required to maintain the transcriptionally repressive state of many genes, including Hox genes, throughout development. PcG PRC1 complex acts via chromatin remodeling and modification of histones; it mediates monoubiquitination of histone H2A 'Lys-119', rendering chromatin heritably changed in its expressibility. Within the PRC1-like complex, regulates RNF2 ubiquitin ligase activity. Regulates the expression of DPPA4 and NANOG in the NT2 embryonic carcinoma cells. The chain is Polycomb group RING finger protein 1 (PCGF1) from Homo sapiens (Human).